Reading from the N-terminus, the 193-residue chain is Ion-translocating oxidoreductase complex subunit A (193 aa).

Transmembrane regions (helical) follow at residues 5–25, 39–59, 63–83, 102–122, 134–154, and 171–191; these read LLLL…FLGL, IGMG…SYLI, ILAP…VIAV, VLGI…VALL, IIYG…FSAM, and SIAM…TGLV.

This sequence belongs to the NqrDE/RnfAE family. The complex is composed of six subunits: RnfA, RnfB, RnfC, RnfD, RnfE and RnfG.

Its subcellular location is the cell inner membrane. Functionally, part of a membrane-bound complex that couples electron transfer with translocation of ions across the membrane. This chain is Ion-translocating oxidoreductase complex subunit A, found in Aliivibrio salmonicida (strain LFI1238) (Vibrio salmonicida (strain LFI1238)).